Reading from the N-terminus, the 1389-residue chain is DNA-directed RNA polymerase subunit beta'' (1389 aa).

Residues cysteine 220, cysteine 290, cysteine 297, and cysteine 300 each coordinate Zn(2+).

This sequence belongs to the RNA polymerase beta' chain family. RpoC2 subfamily. In terms of assembly, in plastids the minimal PEP RNA polymerase catalytic core is composed of four subunits: alpha, beta, beta', and beta''. When a (nuclear-encoded) sigma factor is associated with the core the holoenzyme is formed, which can initiate transcription. Zn(2+) serves as cofactor.

The protein resides in the plastid. It localises to the chloroplast. The enzyme catalyses RNA(n) + a ribonucleoside 5'-triphosphate = RNA(n+1) + diphosphate. In terms of biological role, DNA-dependent RNA polymerase catalyzes the transcription of DNA into RNA using the four ribonucleoside triphosphates as substrates. The sequence is that of DNA-directed RNA polymerase subunit beta'' from Chloranthus spicatus (Chulantree).